We begin with the raw amino-acid sequence, 699 residues long: Methylcrotonoyl-CoA carboxylase subunit alpha, mitochondrial (699 aa).

In terms of domain architecture, Biotin carboxylation spans 30–475 (ITKILIANRG…ETGFIPIHRE (446 aa)). ATP-binding residues include lysine 144, glutamate 228, and histidine 263. The ATP-grasp domain maps to 148–345 (KDIMIKAGVP…LVEWQLKVAE (198 aa)). The active site involves arginine 320. The 76-residue stretch at 624–699 (KGADGVLGSL…EDKKTLAVIV (76 aa)) folds into the Biotinyl-binding domain. Lysine 665 carries the N6-biotinyllysine modification.

In terms of assembly, probably a dodecamer composed of six biotin-containing alpha subunits and six beta subunits. The cofactor is Mn(2+). Biotin is required as a cofactor.

The protein resides in the mitochondrion matrix. The enzyme catalyses 3-methylbut-2-enoyl-CoA + hydrogencarbonate + ATP = 3-methyl-(2E)-glutaconyl-CoA + ADP + phosphate + H(+). It functions in the pathway amino-acid degradation; L-leucine degradation; (S)-3-hydroxy-3-methylglutaryl-CoA from 3-isovaleryl-CoA: step 2/3. Functionally, biotin-attachment subunit of the 3-methylcrotonyl-CoA carboxylase, an enzyme that catalyzes the conversion of 3-methylcrotonyl-CoA to 3-methylglutaconyl-CoA, a critical step for leucine and isovaleric acid catabolism. The chain is Methylcrotonoyl-CoA carboxylase subunit alpha, mitochondrial (mccA) from Dictyostelium discoideum (Social amoeba).